Here is a 239-residue protein sequence, read N- to C-terminus: Probable transcriptional regulatory protein YeeI (239 aa).

Belongs to the TACO1 family. YeeN subfamily.

It is found in the cytoplasm. The protein is Probable transcriptional regulatory protein YeeI (yeeI) of Bacillus subtilis (strain 168).